The primary structure comprises 157 residues: Protein Smg homolog (157 aa).

Belongs to the Smg family.

In Shewanella pealeana (strain ATCC 700345 / ANG-SQ1), this protein is Protein Smg homolog.